The following is a 758-amino-acid chain: Photosystem I P700 chlorophyll a apoprotein A1 (758 aa).

The next 8 membrane-spanning stretches (helical) occupy residues 78-101 (VFSAHFGQLSIIFLWLSGMYFHGA), 164-187 (LYCTAIGALVFAGLMLFAGWFHYH), 203-227 (LNHHLAGLLGLGSLSWARHQVHVSL), 299-317 (IAHHHLAIAILFLIAGHMY), 354-377 (WHAQLSINLAMLGSLTIVVAQHMY), 393-419 (LSLFTHHMWIGGFLIVGAAAHAAIFMV), 441-463 (AIISHLNWVCIFLGFHSFGLYIH), and 539-557 (FLVHHIHAFTIHVTVLILL). 2 residues coordinate [4Fe-4S] cluster: cysteine 581 and cysteine 590. Helical transmembrane passes span 597-618 (HVFLGLFWMYNSISVVIFHFSW) and 672-694 (LSAYGLFFLGAHFVWAFSLMFLF). Histidine 683 is a chlorophyll a' binding site. Residues methionine 691 and tyrosine 699 each contribute to the chlorophyll a site. Phylloquinone is bound at residue tryptophan 700. Residues 732 to 753 (AVGVTHYLLGGIATTWAFFLAR) traverse the membrane as a helical segment.

This sequence belongs to the PsaA/PsaB family. In terms of assembly, the PsaA/B heterodimer binds the P700 chlorophyll special pair and subsequent electron acceptors. PSI consists of a core antenna complex that captures photons, and an electron transfer chain that converts photonic excitation into a charge separation. The eukaryotic PSI reaction center is composed of at least 11 subunits. P700 is a chlorophyll a/chlorophyll a' dimer, A0 is one or more chlorophyll a, A1 is one or both phylloquinones and FX is a shared 4Fe-4S iron-sulfur center. serves as cofactor.

The protein localises to the plastid. The protein resides in the chloroplast thylakoid membrane. It catalyses the reaction reduced [plastocyanin] + hnu + oxidized [2Fe-2S]-[ferredoxin] = oxidized [plastocyanin] + reduced [2Fe-2S]-[ferredoxin]. Its function is as follows. PsaA and PsaB bind P700, the primary electron donor of photosystem I (PSI), as well as the electron acceptors A0, A1 and FX. PSI is a plastocyanin-ferredoxin oxidoreductase, converting photonic excitation into a charge separation, which transfers an electron from the donor P700 chlorophyll pair to the spectroscopically characterized acceptors A0, A1, FX, FA and FB in turn. Oxidized P700 is reduced on the lumenal side of the thylakoid membrane by plastocyanin. The polypeptide is Photosystem I P700 chlorophyll a apoprotein A1 (Pisum sativum (Garden pea)).